Consider the following 196-residue polypeptide: dCTP deaminase, dUMP-forming (196 aa).

DCTP contacts are provided by residues K101 to R106, D119, T127 to E129, Q148, Y162, and Q174. Residue E129 is the Proton donor/acceptor of the active site.

The protein belongs to the dCTP deaminase family. In terms of assembly, homotrimer.

It carries out the reaction dCTP + 2 H2O = dUMP + NH4(+) + diphosphate. The protein operates within pyrimidine metabolism; dUMP biosynthesis; dUMP from dCTP: step 1/1. In terms of biological role, bifunctional enzyme that catalyzes both the deamination of dCTP to dUTP and the hydrolysis of dUTP to dUMP without releasing the toxic dUTP intermediate. In Thermobifida fusca (strain YX), this protein is dCTP deaminase, dUMP-forming.